The sequence spans 179 residues: Replicase large subunit (179 aa).

This sequence belongs to the ssRNA positive-strand viruses RNA-directed RNA polymerase family.

The enzyme catalyses RNA(n) + a ribonucleoside 5'-triphosphate = RNA(n+1) + diphosphate. It catalyses the reaction ATP + H2O = ADP + phosphate + H(+). Replicase large subunit: is an RNA-dependent RNA polymerase active in viral RNA replication. This is Replicase large subunit from Tobacco rattle virus (strain PSG).